A 74-amino-acid polypeptide reads, in one-letter code: Peptide BmKb2 (74 aa).

Residues 1-22 form the signal peptide; sequence MEIKYLLTVFLVLLIVSDHCQA. Lysine amide is present on Lys-40. Residues 46 to 74 constitute a propeptide that is removed on maturation; sequence DLNGQIDHFKNFRKRDAELEELLSKLPIY.

It belongs to the non-disulfide-bridged peptide (NDBP) superfamily. Short antimicrobial peptide (group 4) family.

It is found in the secreted. The protein resides in the target cell membrane. In terms of biological role, antibacterial peptide. This peptide gene is up-regulated at the transcriptional level after the venom gland is challenged by Gram-positive bacteria. This Olivierus martensii (Manchurian scorpion) protein is Peptide BmKb2.